A 148-amino-acid chain; its full sequence is SPbeta prophage-derived disulfide bond formation protein B (148 aa).

A helical transmembrane segment spans residues 7–26 (KSFFLLLFFLSFFGTMASLF). The cysteines at positions 36 and 39 are disulfide-linked. Helical transmembrane passes span 41-60 (YQRI…LLKK) and 67-84 (YVVF…YHYI). A disulfide bond links Cys95 and Cys102. The chain crosses the membrane as a helical span at residues 111–135 (GFITLPLMSSVCFALIFGIGLKLII).

The protein belongs to the DsbB family. BdbC subfamily.

Its subcellular location is the cell membrane. In terms of biological role, important but not absolutely essential for the production of the lantibiotic sublancin 168, it may also be required for the stability of other secreted proteins. Not required for competence for DNA uptake. This chain is SPbeta prophage-derived disulfide bond formation protein B (bdbB), found in Bacillus subtilis (strain 168).